A 557-amino-acid polypeptide reads, in one-letter code: Nucleoprotein (557 aa).

The binding site for the cap structure m7GTP stretch occupies residues 54–235; that stretch reads MRKDKRSDDD…ITKEESANNI (182 aa). Mn(2+) contacts are provided by D379 and E381. Zn(2+) contacts are provided by E389, C496, H499, and C518. D522 contributes to the Mn(2+) binding site.

It belongs to the arenaviridae nucleocapsid protein family. In terms of assembly, homomultimerizes to form the nucleocapsid. Binds to viral genomic RNA. Interacts with glycoprotein G2. Interacts with protein Z; this interaction probably directs the encapsidated genome to budding sites. Interacts with protein L; this interaction does not interfere with Z-L interaction. Interacts with host IKBKE (via Protein kinase domain); the interaction inhibits IKBKE kinase activity.

It localises to the virion. The protein resides in the host cytoplasm. Functionally, encapsidates the genome, protecting it from nucleases. The encapsidated genomic RNA is termed the nucleocapsid (NC). Serves as template for viral transcription and replication. The increased presence of protein N in host cell does not seem to trigger the switch from transcription to replication as observed in other negative strain RNA viruses. Through the interaction with host IKBKE, strongly inhibits the phosphorylation and nuclear translocation of host IRF3, a protein involved in interferon activation pathway, leading to the inhibition of interferon-beta and IRF3-dependent promoters activation. Also encodes a functional 3'-5' exoribonuclease that degrades preferentially dsRNA substrates and thereby participates in the suppression of interferon induction. The chain is Nucleoprotein from Calomys callosus (Large vesper mouse).